Consider the following 1249-residue polypeptide: LRR receptor-like serine/threonine-protein kinase GSO1 (1249 aa).

Residues 1–18 (MQPLVLLLLFILCFSGLG) form the signal peptide. At 19-876 (QPGIINNDLQ…QQGLSARSVV (858 aa)) the chain is on the extracellular side. 2 N-linked (GlcNAc...) asparagine glycosylation sites follow: N77 and N117. LRR repeat units lie at residues 94–118 (FDNLIHLDLSSNNLVGPIPTALSNL), 119–142 (TSLESLFLFSNQLTGEIPSQLGSL), 144–166 (NIRSLRIGDNELVGDIPETLGNL), 168–190 (NLQMLALASCRLTGPIPSQLGRL), 191–214 (VRVQSLILQDNYLEGPIPAELGNC), 216–238 (DLTVFTAAENMLNGTIPAELGRL), 239–262 (ENLEILNLANNSLTGEIPSQLGEM), 264–285 (QLQYLSLMANQLQGLIPKSLAD), 286–310 (LGNLQTLDLSANNLTGEIPEEFWNM), 312–334 (QLLDLVLANNHLSGSLPKSICSN), 336–359 (TNLEQLVLSGTQLSGEIPVELSKC), 360–383 (QSLKQLDLSNNSLAGSIPEALFEL), 385–407 (ELTDLYLHNNTLEGTLSPSISNL), 408–431 (TNLQWLVLYHNNLEGKLPKEISAL), 433–455 (KLEVLFLYENRFSGEIPQEIGNC), 457–479 (SLKMIDMFGNHFEGEIPPSIGRL), 480–503 (KELNLLHLRQNELVGGLPASLGNC), 505–527 (QLNILDLADNQLSGSIPSSFGFL), 528–551 (KGLEQLMLYNNSLQGNLPDSLISL), 553–574 (NLTRINLSHNRLNGTIHPLCGS), 576–598 (SYLSFDVTNNGFEDEIPLELGNS), 599–622 (QNLDRLRLGKNQLTGKIPWTLGKI), 623–646 (RELSLLDMSSNALTGTIPLQLVLC), 648–670 (KLTHIDLNNNFLSGPIPPWLGKL), 671–694 (SQLGELKLSSNQFVESLPTELFNC), 696–718 (KLLVLSLDGNSLNGSIPQEIGNL), 719–742 (GALNVLNLDKNQFSGSLPQAMGKL), 744–766 (KLYELRLSRNSLTGEIPVEIGQL), 767–791 (QDLQSALDLSYNNFTGDIPSTIGTL), 792–815 (SKLETLDLSHNQLTGEVPGSVGDM), and 817–838 (SLGYLNVSFNNLGGKLKKQFSR). N-linked (GlcNAc...) asparagine glycosylation is found at N213, N228, and N248. 3 N-linked (GlcNAc...) asparagine glycosylation sites follow: N298, N309, and N334. N-linked (GlcNAc...) asparagine glycosylation is found at N369, N393, and N406. N-linked (GlcNAc...) asparagine glycosylation is present at N454. Residues N537, N553, N558, and N565 are each glycosylated (N-linked (GlcNAc...) asparagine). 2 N-linked (GlcNAc...) asparagine glycosylation sites follow: N693 and N708. The N-linked (GlcNAc...) asparagine glycan is linked to N779. N-linked (GlcNAc...) asparagine glycosylation occurs at N822. The chain crosses the membrane as a helical span at residues 877-897 (IISAISALTAIGLMILVIALF). Residues 898 to 1249 (FKQRHDFFKK…NNRTAGYKKL (352 aa)) are Cytoplasmic-facing. T948 bears the Phosphothreonine mark. The region spanning 951–1240 (LSEEFMIGSG…ACDSLLHVYN (290 aa)) is the Protein kinase domain. ATP is bound by residues 957–965 (IGSGGSGKV) and K979. Y1027 and Y1071 each carry phosphotyrosine. D1084 functions as the Proton acceptor in the catalytic mechanism. Y1129 and Y1136 each carry phosphotyrosine.

This sequence belongs to the protein kinase superfamily. Ser/Thr protein kinase family. In terms of assembly, interacts with CIF1 and CIF2. Mostly expressed in siliques, seeds, developing embryos and seedlings, detected in flower buds and roots, but not in leaves or stems.

It is found in the cell membrane. It carries out the reaction L-seryl-[protein] + ATP = O-phospho-L-seryl-[protein] + ADP + H(+). It catalyses the reaction L-threonyl-[protein] + ATP = O-phospho-L-threonyl-[protein] + ADP + H(+). Functionally, together with GSO2, receptor-like serine/threonine-kinase required during the development of the epidermal surface in embryos and cotyledons. In coordination with GSO2, regulates root growth through control of cell division and cell fate specification. Controls seedling root growth by modulating sucrose response after germination. Receptor of the peptide hormones CIF1 and CIF2 required for contiguous Casparian strip diffusion barrier formation in roots. Required for localizing CASP proteins into the Casparian strip following an uninterrupted, ring-like domain, to trigger endodermal differentiation and thus regulate potassium ion (K) homeostasis. Involved in the maintenance of water transport and root pressure. May also be involved in the regulation of suberin accumulation in the endodermis. The polypeptide is LRR receptor-like serine/threonine-protein kinase GSO1 (Arabidopsis thaliana (Mouse-ear cress)).